Consider the following 110-residue polypeptide: Hydrogenase maturation factor HypA (110 aa).

His2 contributes to the Ni(2+) binding site. Zn(2+) is bound by residues Cys70, Cys73, Cys86, and Cys89.

Belongs to the HypA/HybF family.

Involved in the maturation of [NiFe] hydrogenases. Required for nickel insertion into the metal center of the hydrogenase. This is Hydrogenase maturation factor HypA from Geobacter sp. (strain M21).